The sequence spans 439 residues: Histone acetyltransferase ESA1 (439 aa).

The Tudor-knot domain occupies 23 to 73 (VGCKSWVLKDGQDRLAEILSINSRRDPPKFYVHYEDFNKRLDEWITADRLQ). A disordered region spans residues 83–120 (PKELEEKKDSKKKKQQQNKSATPQAASATPDGGDVMDL). In terms of domain architecture, MYST-type HAT spans 156–427 (ARVRNLNKVI…IDPQKLIWTP (272 aa)). The segment at 189–214 (VYIDDFSLQYFGSKKQYERYRKKCTL) adopts a C2HC MYST-type; degenerate zinc-finger fold. Positions 239–260 (RTWCRNLCLLSKLFLDHKTLYY) match the ESA1-RPD3 motif motif. An N6-acetyllysine; by autocatalysis modification is found at Lys-256. Acetyl-CoA contacts are provided by residues 297–301 (ACILT) and 306–312 (QRMGYGR). Glu-332 acts as the Proton donor/acceptor in catalysis. Ser-336 lines the acetyl-CoA pocket.

Belongs to the MYST (SAS/MOZ) family. Component of the NuA4 histone acetyltransferase complex. In terms of processing, autoacetylation at Lys-256 is required for proper function.

Its subcellular location is the nucleus. The protein resides in the chromosome. It catalyses the reaction L-lysyl-[histone] + acetyl-CoA = N(6)-acetyl-L-lysyl-[histone] + CoA + H(+). The catalysed reaction is L-lysyl-[protein] + acetyl-CoA = N(6)-acetyl-L-lysyl-[protein] + CoA + H(+). It carries out the reaction 2-hydroxyisobutanoyl-CoA + L-lysyl-[protein] = N(6)-(2-hydroxyisobutanoyl)-L-lysyl-[protein] + CoA + H(+). The enzyme catalyses (2E)-butenoyl-CoA + L-lysyl-[protein] = N(6)-(2E)-butenoyl-L-lysyl-[protein] + CoA + H(+). Its function is as follows. Catalytic component of the NuA4 histone acetyltransferase (HAT) complex which is involved in epigenetic transcriptional activation of selected genes principally by acetylation of nucleosomal histones H4, H3, H2B, H2A and H2A variant H2A.Z. Acetylates histone H4 to form H4K5ac, H4K8ac, H4K12ac and H4K16ac, histone H3 to form H3K14ac, and histone H2A to form H2AK4ac and H2AK7ac. The NuA4 complex is involved in the DNA damage response and is required for chromosome segregation. The NuA4 complex plays a direct role in repair of DNA double-strand breaks (DSBs) through homologous recombination. Recruitment to promoters depends on H3K4me. Also acetylates non-histone proteins. In addition to protein acetyltransferase, can use different acyl-CoA substrates, such as 2-hydroxyisobutanoyl-CoA (2-hydroxyisobutyryl-CoA) or (2E)-butenoyl-CoA (crotonyl-CoA), and is able to mediate protein 2-hydroxyisobutyrylation and crotonylation, respectively. The chain is Histone acetyltransferase ESA1 (ESA1) from Kluyveromyces lactis (strain ATCC 8585 / CBS 2359 / DSM 70799 / NBRC 1267 / NRRL Y-1140 / WM37) (Yeast).